The following is a 21-amino-acid chain: AEYDVSDADIEAFYQXXTMTW.

In terms of biological role, possible mediator for cell division in the blooming process. The polypeptide is Preblooming protein 2 (Prorocentrum triestinum (Red tide alga)).